Consider the following 315-residue polypeptide: Indoleacetate decarboxylase activating enzyme (315 aa).

A Radical SAM core domain is found at H21–K311. [4Fe-4S] cluster contacts are provided by C35, C39, C42, C61, C64, C67, C71, C98, C101, C106, and C110. 4Fe-4S ferredoxin-type domains follow at residues P52–D81 and G89–E120. S-adenosyl-L-methionine is bound by residues G149, D198 to K200, and H271.

It belongs to the organic radical-activating enzymes family. Requires [4Fe-4S] cluster as cofactor.

It carries out the reaction glycyl-[protein] + reduced [flavodoxin] + S-adenosyl-L-methionine = glycin-2-yl radical-[protein] + semiquinone [flavodoxin] + 5'-deoxyadenosine + L-methionine + H(+). Functionally, catalyzes activation of the indoleacetate decarboxylase OsIAD under anaerobic conditions by generation of an organic free radical on a glycine residue, via a homolytic cleavage of S-adenosyl-L-methionine (SAM). The sequence is that of Indoleacetate decarboxylase activating enzyme from Tractidigestivibacter scatoligenes (Olsenella scatoligenes).